The chain runs to 347 residues: Quinolinate synthase (347 aa).

2 residues coordinate iminosuccinate: H47 and S68. Residue C113 coordinates [4Fe-4S] cluster. Iminosuccinate is bound by residues 139–141 and S156; that span reads YAN. C200 is a binding site for [4Fe-4S] cluster. Residues 226–228 and T243 contribute to the iminosuccinate site; that span reads HPE. C297 contributes to the [4Fe-4S] cluster binding site.

The protein belongs to the quinolinate synthase family. Type 1 subfamily. Requires [4Fe-4S] cluster as cofactor.

The protein localises to the cytoplasm. It catalyses the reaction iminosuccinate + dihydroxyacetone phosphate = quinolinate + phosphate + 2 H2O + H(+). Its pathway is cofactor biosynthesis; NAD(+) biosynthesis; quinolinate from iminoaspartate: step 1/1. Its function is as follows. Catalyzes the condensation of iminoaspartate with dihydroxyacetone phosphate to form quinolinate. The protein is Quinolinate synthase of Salmonella choleraesuis (strain SC-B67).